Reading from the N-terminus, the 724-residue chain is Long-chain-fatty-acid--CoA ligase ACSBG1 (724 aa).

The tract at residues 1–51 is disordered; that stretch reads MPRNSGAGYGCPHGDPSMLDSRETPQESRQDMTVGTTQEKLKTSSLTDRQP. The span at 20-30 shows a compositional bias: basic and acidic residues; that stretch reads DSRETPQESRQ. Polar residues predominate over residues 31-51; that stretch reads DMTVGTTQEKLKTSSLTDRQP. Phosphoserine is present on residues serine 53 and serine 56. Residues 282-290, 472-477, aspartate 550, and arginine 565 contribute to the ATP site; these read TSGTTGNPK and AGYGLS. Tyrosine 658 is subject to Phosphotyrosine. Lysine 701 serves as a coordination point for ATP.

It belongs to the ATP-dependent AMP-binding enzyme family. Bubblegum subfamily.

The protein localises to the cytoplasm. The protein resides in the cytoplasmic vesicle. It localises to the microsome. Its subcellular location is the endoplasmic reticulum. It is found in the cell membrane. The catalysed reaction is a long-chain fatty acid + ATP + CoA = a long-chain fatty acyl-CoA + AMP + diphosphate. It catalyses the reaction (E)-hexadec-2-enoate + ATP + CoA = (2E)-hexadecenoyl-CoA + AMP + diphosphate. It carries out the reaction hexadecanoate + ATP + CoA = hexadecanoyl-CoA + AMP + diphosphate. Its function is as follows. Catalyzes the conversion of fatty acids such as long-chain and very long-chain fatty acids to their active form acyl-CoAs for both synthesis of cellular lipids, and degradation via beta-oxidation. Can activate diverse saturated, monosaturated and polyunsaturated fatty acids. The protein is Long-chain-fatty-acid--CoA ligase ACSBG1 of Macaca fascicularis (Crab-eating macaque).